Consider the following 88-residue polypeptide: Small ribosomal subunit protein bS16 (88 aa).

It belongs to the bacterial ribosomal protein bS16 family.

The chain is Small ribosomal subunit protein bS16 from Leptospira borgpetersenii serovar Hardjo-bovis (strain L550).